The sequence spans 246 residues: Probable maleylacetoacetate isomerase 1 (246 aa).

Positions 32-116 constitute a GST N-terminal domain; the sequence is TKPILYSYWP…YLEETRPQPA (85 aa). Glutathione-binding positions include 42–47, Val88, 100–101, Gln140, and 144–146; these read SSCSWR, DS, and NVS. The 121-residue stretch at 121-241 folds into the GST C-terminal domain; that stretch reads DPVKRAKIRE…HPSTQPDCPP (121 aa).

Belongs to the GST superfamily. Zeta family. It depends on glutathione as a cofactor.

It is found in the cytoplasm. It carries out the reaction 4-maleylacetoacetate = 4-fumarylacetoacetate. The catalysed reaction is RX + glutathione = an S-substituted glutathione + a halide anion + H(+). The protein operates within amino-acid degradation; L-phenylalanine degradation; acetoacetate and fumarate from L-phenylalanine: step 5/6. Its function is as follows. Catalyzes the glutathione dependent oxygenation of dichloroacetic acid to glyoxylic acid in vitro. Possesses low glutathione thioltransferase activity toward 4-hydroxynonenal (4-HNE). Has no glutathione thioltransferase activity with adrenochrome, phenethyl isothiocyanate (PEITC), 5-hydroperoxyeicosatetraenoic acid ((5S)-HpETE), prostaglandin A2 (PGA2) or 2-hydroxyethyldisulfide (HED). In Drosophila melanogaster (Fruit fly), this protein is Probable maleylacetoacetate isomerase 1 (GstZ1).